The primary structure comprises 96 residues: Muconolactone Delta-isomerase 2 (96 aa).

Belongs to the muconolactone Delta-isomerase family. In terms of assembly, homodecamer.

It carries out the reaction (S)-muconolactone = (4,5-dihydro-5-oxofuran-2-yl)-acetate. It functions in the pathway aromatic compound metabolism; beta-ketoadipate pathway; 5-oxo-4,5-dihydro-2-furylacetate from catechol: step 3/3. The polypeptide is Muconolactone Delta-isomerase 2 (catC2) (Acinetobacter lwoffii).